The sequence spans 349 residues: Protein RecA (349 aa).

65-72 (GPESSGKT) contacts ATP.

Belongs to the RecA family.

The protein localises to the cytoplasm. In terms of biological role, can catalyze the hydrolysis of ATP in the presence of single-stranded DNA, the ATP-dependent uptake of single-stranded DNA by duplex DNA, and the ATP-dependent hybridization of homologous single-stranded DNAs. It interacts with LexA causing its activation and leading to its autocatalytic cleavage. The protein is Protein RecA of Clostridium acetobutylicum (strain ATCC 824 / DSM 792 / JCM 1419 / IAM 19013 / LMG 5710 / NBRC 13948 / NRRL B-527 / VKM B-1787 / 2291 / W).